The primary structure comprises 370 residues: MAKRVVLGMSGGVDSSVCAYLLQQQGYEVVGLFMRNWDSFLNNDFLGNEAISQDVCPQEQDYADAKEVAKQLNIPLYRVDFIKEYWDHVFSYLIEEYKIGRTPNPDIFCNKYIKFNFFAQVAFSKYQADFIAMGHYAYCENGELFKAKDDSKDQSYFLAQLSNEQLKKVIFPLANLTKQEVREIAKNLNLATATKKDSTGICFIGERKFTKFLENYIPAQPGKIIDIATKQVVGSHIGTMYYTIGQRKGLNLGGFSKPYFVVGHNLEKKVLYVANEDFPEYLLSDKLIAIGFNQIAYKFDTNNLSAKFRYRQKDIPIKLKLLANSEIEVSYNDTEAVTPGQEIVIYDGNKVVGGAIINEVFYKNQKKTYI.

Residues glycine 8–serine 15 and methionine 34 contribute to the ATP site. An interaction with target base in tRNA region spans residues asparagine 104–aspartate 106. The active-site Nucleophile is the cysteine 109. Cysteine 109 and cysteine 202 are oxidised to a cystine. Glycine 134 lines the ATP pocket. Positions lysine 152–glutamine 154 are interaction with tRNA. Catalysis depends on cysteine 202, which acts as the Cysteine persulfide intermediate. The interaction with tRNA stretch occupies residues arginine 309–tyrosine 310.

It belongs to the MnmA/TRMU family.

It localises to the cytoplasm. The catalysed reaction is S-sulfanyl-L-cysteinyl-[protein] + uridine(34) in tRNA + AH2 + ATP = 2-thiouridine(34) in tRNA + L-cysteinyl-[protein] + A + AMP + diphosphate + H(+). In terms of biological role, catalyzes the 2-thiolation of uridine at the wobble position (U34) of tRNA, leading to the formation of s(2)U34. The polypeptide is tRNA-specific 2-thiouridylase MnmA (Metamycoplasma arthritidis (strain 158L3-1) (Mycoplasma arthritidis)).